A 461-amino-acid polypeptide reads, in one-letter code: Bifunctional protein GlmU (461 aa).

The tract at residues 1-235 is pyrophosphorylase; the sequence is MTDTRKQRAA…EDDLIGCDSK (235 aa). UDP-N-acetyl-alpha-D-glucosamine is bound by residues 13 to 16, lysine 27, glutamine 80, 85 to 86, 108 to 110, glycine 146, glutamate 161, and asparagine 176; these read LAAG, GT, and YGD. Aspartate 110 serves as a coordination point for Mg(2+). The segment at 236-256 is linker; that stretch reads ADLAEAEAIFQQKRRRALMEA. Positions 257–461 are N-acetyltransferase; it reads GVTMVAPETV…ARTTDQNKKG (205 aa). Positions 322 and 340 each coordinate UDP-N-acetyl-alpha-D-glucosamine. Histidine 352 serves as the catalytic Proton acceptor. Tyrosine 355 and asparagine 366 together coordinate UDP-N-acetyl-alpha-D-glucosamine. Residues alanine 369, 375–376, serine 394, serine 412, and arginine 429 contribute to the acetyl-CoA site; that span reads NY.

In the N-terminal section; belongs to the N-acetylglucosamine-1-phosphate uridyltransferase family. The protein in the C-terminal section; belongs to the transferase hexapeptide repeat family. In terms of assembly, homotrimer. It depends on Mg(2+) as a cofactor.

It localises to the cytoplasm. It carries out the reaction alpha-D-glucosamine 1-phosphate + acetyl-CoA = N-acetyl-alpha-D-glucosamine 1-phosphate + CoA + H(+). It catalyses the reaction N-acetyl-alpha-D-glucosamine 1-phosphate + UTP + H(+) = UDP-N-acetyl-alpha-D-glucosamine + diphosphate. It participates in nucleotide-sugar biosynthesis; UDP-N-acetyl-alpha-D-glucosamine biosynthesis; N-acetyl-alpha-D-glucosamine 1-phosphate from alpha-D-glucosamine 6-phosphate (route II): step 2/2. The protein operates within nucleotide-sugar biosynthesis; UDP-N-acetyl-alpha-D-glucosamine biosynthesis; UDP-N-acetyl-alpha-D-glucosamine from N-acetyl-alpha-D-glucosamine 1-phosphate: step 1/1. It functions in the pathway bacterial outer membrane biogenesis; LPS lipid A biosynthesis. Functionally, catalyzes the last two sequential reactions in the de novo biosynthetic pathway for UDP-N-acetylglucosamine (UDP-GlcNAc). The C-terminal domain catalyzes the transfer of acetyl group from acetyl coenzyme A to glucosamine-1-phosphate (GlcN-1-P) to produce N-acetylglucosamine-1-phosphate (GlcNAc-1-P), which is converted into UDP-GlcNAc by the transfer of uridine 5-monophosphate (from uridine 5-triphosphate), a reaction catalyzed by the N-terminal domain. The polypeptide is Bifunctional protein GlmU (Hyphomonas neptunium (strain ATCC 15444)).